Reading from the N-terminus, the 34-residue chain is Dermaseptin-H5 (34 aa).

Expressed by the skin glands.

It localises to the secreted. Functionally, has antimicrobial activity. The polypeptide is Dermaseptin-H5 (Pithecopus hypochondrialis (Orange-legged leaf frog)).